The sequence spans 971 residues: Protein cwh43 (971 aa).

Residues 1 to 242 (MTEKTSSLVF…PSSFATRKKE (242 aa)) form a PGAP2-like region. Transmembrane regions (helical) follow at residues 15 to 35 (VALVHTICSFAAFFIPLALAL), 71 to 91 (VFQWLIALTATPRLLVLLLWF), 101 to 121 (VIITTALGVLRTALCGGWVYV), 129 to 149 (WHDIFMIGYLISNAPWFILVS), 161 to 181 (IRNIGSALFVLTIFPLIYWYI), 188 to 208 (IPGAYTVYAFFEWSLILWDIL), 286 to 306 (VYLSFVFWSVLTSLGLLVWYF), 313 to 333 (ISGYEACILFELSPFLLGIPL), 336 to 356 (KFASKVPVIFLFLNVIGIAAY), 366 to 386 (FVTAFSVCCECLAWTSLFSNI), 397 to 417 (ISTFLFGLLASSIAKYSFFSN), 432 to 452 (QIPALIVGIIACLIFAIFHVQ), 467 to 487 (ITALSAALSLGTVLFCLHTFL), 509 to 529 (YPHGAVSIVVSICAVLVAPYL), 532 to 552 (SGAFMLIGFVLACFGSYFMYI), 555 to 575 (GWCSYLGGLIFTSYVLIYSFA), 588 to 608 (VWGGAFLVYILYSLAHVWVVA), 622 to 642 (TSYILIFIGWNLAALVPAYSG), and 673 to 693 (LLTGFCLALMALKFAIQNMPP). A PGAP2IP-like region spans residues 243–971 (KGEHLSYAEA…LVVHEPWYYD (729 aa)). The active site involves histidine 826.

It in the N-terminal section; belongs to the PGAP2 family. In the C-terminal section; belongs to the PGAP2IP family.

It localises to the cell membrane. Its subcellular location is the endoplasmic reticulum membrane. In terms of biological role, involved in the maintenance of cell wall integrity. Required for the replacement of the diacylglycerol moiety by ceramides during GPI-anchor maturation. The sequence is that of Protein cwh43 (cwh43) from Schizosaccharomyces pombe (strain 972 / ATCC 24843) (Fission yeast).